We begin with the raw amino-acid sequence, 412 residues long: ATP phosphoribosyltransferase regulatory subunit (412 aa).

Belongs to the class-II aminoacyl-tRNA synthetase family. HisZ subfamily. As to quaternary structure, heteromultimer composed of HisG and HisZ subunits.

Its subcellular location is the cytoplasm. Its pathway is amino-acid biosynthesis; L-histidine biosynthesis; L-histidine from 5-phospho-alpha-D-ribose 1-diphosphate: step 1/9. Required for the first step of histidine biosynthesis. May allow the feedback regulation of ATP phosphoribosyltransferase activity by histidine. The protein is ATP phosphoribosyltransferase regulatory subunit of Dehalococcoides mccartyi (strain ATCC BAA-2266 / KCTC 15142 / 195) (Dehalococcoides ethenogenes (strain 195)).